Here is a 970-residue protein sequence, read N- to C-terminus: Insulin-degrading enzyme-like 1, peroxisomal (970 aa).

His69 contacts Zn(2+). Glu72 (proton acceptor) is an active-site residue. His73 lines the Zn(2+) pocket. The active site involves Glu143. Residue Glu150 coordinates Zn(2+).

This sequence belongs to the peptidase M16 family. Zn(2+) is required as a cofactor.

It localises to the peroxisome. Peptidase that might be involved in pathogen or wound response. Not required for peroxisome biogenesis, indole-3-butyric acid (IBA) metabolism, fatty acid beta-oxidation or degradation of glyoxylate cycle enzymes during seedling development. The polypeptide is Insulin-degrading enzyme-like 1, peroxisomal (PXM16) (Arabidopsis thaliana (Mouse-ear cress)).